Here is a 137-residue protein sequence, read N- to C-terminus: NADH-quinone oxidoreductase subunit A (137 aa).

3 helical membrane-spanning segments follow: residues 12–32, 66–86, and 96–116; these read WGFA…LGVS, FYLV…LFAW, and TGFV…VYLF.

Belongs to the complex I subunit 3 family. In terms of assembly, NDH-1 is composed of 13 different subunits. Subunits NuoA, H, J, K, L, M, N constitute the membrane sector of the complex.

The protein localises to the cell inner membrane. It catalyses the reaction a quinone + NADH + 5 H(+)(in) = a quinol + NAD(+) + 4 H(+)(out). NDH-1 shuttles electrons from NADH, via FMN and iron-sulfur (Fe-S) centers, to quinones in the respiratory chain. The immediate electron acceptor for the enzyme in this species is believed to be ubiquinone. Couples the redox reaction to proton translocation (for every two electrons transferred, four hydrogen ions are translocated across the cytoplasmic membrane), and thus conserves the redox energy in a proton gradient. This Pseudomonas fluorescens (strain Pf0-1) protein is NADH-quinone oxidoreductase subunit A.